The following is a 361-amino-acid chain: Phospho-N-acetylmuramoyl-pentapeptide-transferase (361 aa).

The next 10 membrane-spanning stretches (helical) occupy residues 25–45 (RAVL…PAVI), 73–93 (TMGG…WADL), 97–117 (YVWL…VDDW), 134–154 (YFWQ…TASL), 168–188 (ATFG…IVGA), 200–220 (GLAI…AYVA), 237–257 (AGEL…FLWF), 264–284 (VFMG…VAVV), 289–309 (IILF…MIQV), and 338–358 (QVVV…LSSL).

Belongs to the glycosyltransferase 4 family. MraY subfamily. Requires Mg(2+) as cofactor.

The protein resides in the cell inner membrane. The catalysed reaction is UDP-N-acetyl-alpha-D-muramoyl-L-alanyl-gamma-D-glutamyl-meso-2,6-diaminopimeloyl-D-alanyl-D-alanine + di-trans,octa-cis-undecaprenyl phosphate = di-trans,octa-cis-undecaprenyl diphospho-N-acetyl-alpha-D-muramoyl-L-alanyl-D-glutamyl-meso-2,6-diaminopimeloyl-D-alanyl-D-alanine + UMP. It functions in the pathway cell wall biogenesis; peptidoglycan biosynthesis. In terms of biological role, catalyzes the initial step of the lipid cycle reactions in the biosynthesis of the cell wall peptidoglycan: transfers peptidoglycan precursor phospho-MurNAc-pentapeptide from UDP-MurNAc-pentapeptide onto the lipid carrier undecaprenyl phosphate, yielding undecaprenyl-pyrophosphoryl-MurNAc-pentapeptide, known as lipid I. This is Phospho-N-acetylmuramoyl-pentapeptide-transferase from Thiobacillus denitrificans (strain ATCC 25259 / T1).